Here is a 991-residue protein sequence, read N- to C-terminus: Nonsense-mediated mRNA decay factor SMG8 (991 aa).

Disordered stretches follow at residues 16–41, 82–127, and 279–299; these read AWMG…PEPP, HQDP…EGNR, and PPRN…PKRR. Over residues 95–110 the composition is skewed to low complexity; sequence EAGAVGEAGGAEDPGA. Ser115 carries the phosphoserine modification. A compositionally biased stretch (basic and acidic residues) spans 279–289; it reads PPRNQDPAHPD. Residues 290-299 show a composition bias toward basic residues; the sequence is KPKKHSPKRR. Residues Ser469 and Ser668 each carry the phosphoserine modification. Residues 653–722 form a disordered region; that stretch reads FEPSTPDPAP…PQAGGDNPEV (70 aa). Over residues 675 to 684 the composition is skewed to basic and acidic residues; the sequence is DADKLKEKEP. The segment covering 685–706 has biased composition (polar residues); it reads QTQGESTSLSLALSLGQSTDSL. Ser742 and Ser895 each carry phosphoserine. Arg898 carries the omega-N-methylarginine modification.

Belongs to the SMG8 family. In terms of assembly, component of the SMG1C complex composed of SMG1, SMG8 and SMG9; the recruitment of SMG8 to SMG1 N-terminus induces a large conformational change in the SMG1 C-terminal head domain containing the catalytic domain. Forms heterodimers with SMG9; this assembly form may represent a SMG1C intermediate form. In terms of processing, phosphorylated by SMG1.

In terms of biological role, involved in nonsense-mediated decay (NMD) of mRNAs containing premature stop codons. Is recruited by release factors to stalled ribosomes together with SMG1 and SMG9 (forming the SMG1C protein kinase complex) and, in the SMG1C complex, is required to mediate the recruitment of SMG1 to the ribosome:SURF complex and to suppress SMG1 kinase activity until the ribosome:SURF complex locates the exon junction complex (EJC). Acts as a regulator of kinase activity. The chain is Nonsense-mediated mRNA decay factor SMG8 (SMG8) from Homo sapiens (Human).